A 263-amino-acid polypeptide reads, in one-letter code: Hydroxyacylglutathione hydrolase (263 aa).

Zn(2+) is bound by residues His55, His57, Asp59, His60, His117, Asp134, and His172.

The protein belongs to the metallo-beta-lactamase superfamily. Glyoxalase II family. As to quaternary structure, monomer. Zn(2+) serves as cofactor.

It carries out the reaction an S-(2-hydroxyacyl)glutathione + H2O = a 2-hydroxy carboxylate + glutathione + H(+). It functions in the pathway secondary metabolite metabolism; methylglyoxal degradation; (R)-lactate from methylglyoxal: step 2/2. In terms of biological role, thiolesterase that catalyzes the hydrolysis of S-D-lactoyl-glutathione to form glutathione and D-lactic acid. The protein is Hydroxyacylglutathione hydrolase of Shewanella baltica (strain OS185).